We begin with the raw amino-acid sequence, 524 residues long: uncharacterized protein (524 aa).

Polar residues predominate over residues 83–101 (NSTPSKQAKPLQRNSPYQG). 2 disordered regions span residues 83-108 (NSTP…SENQ) and 155-179 (PPCN…KRPR).

The protein resides in the cytoplasm. This is an uncharacterized protein from Saccharomyces cerevisiae (strain ATCC 204508 / S288c) (Baker's yeast).